The sequence spans 321 residues: Altered inheritance of mitochondria protein 18, mitochondrial (321 aa).

The N-terminal 72 residues, 1 to 72 (MDRGRCANML…LLATSLYYRD (72 aa)), are a transit peptide targeting the mitochondrion.

Belongs to the AIM18/AIM46 family.

Its subcellular location is the mitochondrion. This is Altered inheritance of mitochondria protein 18, mitochondrial (AIM18) from Saccharomyces cerevisiae (strain AWRI1631) (Baker's yeast).